The following is a 492-amino-acid chain: Ketol-acid reductoisomerase (NADP(+)) (492 aa).

Residues 15 to 208 (AQLGKCRFMA…GGDRAGVLES (194 aa)) form the KARI N-terminal Rossmann domain. NADP(+) is bound by residues 45–48 (CGAQ), Arg68, Arg76, Ser78, and 108–110 (DKQ). His132 is a catalytic residue. Gly158 contacts NADP(+). 2 consecutive KARI C-terminal knotted domains span residues 209–344 (SFVA…KAPP) and 345–485 (FEGK…MTDM). Residues Asp217, Glu221, Glu389, and Glu393 each contribute to the Mg(2+) site. Ser414 lines the substrate pocket.

Belongs to the ketol-acid reductoisomerase family. Mg(2+) serves as cofactor.

The enzyme catalyses (2R)-2,3-dihydroxy-3-methylbutanoate + NADP(+) = (2S)-2-acetolactate + NADPH + H(+). It catalyses the reaction (2R,3R)-2,3-dihydroxy-3-methylpentanoate + NADP(+) = (S)-2-ethyl-2-hydroxy-3-oxobutanoate + NADPH + H(+). The protein operates within amino-acid biosynthesis; L-isoleucine biosynthesis; L-isoleucine from 2-oxobutanoate: step 2/4. It functions in the pathway amino-acid biosynthesis; L-valine biosynthesis; L-valine from pyruvate: step 2/4. Functionally, involved in the biosynthesis of branched-chain amino acids (BCAA). Catalyzes an alkyl-migration followed by a ketol-acid reduction of (S)-2-acetolactate (S2AL) to yield (R)-2,3-dihydroxy-isovalerate. In the isomerase reaction, S2AL is rearranged via a Mg-dependent methyl migration to produce 3-hydroxy-3-methyl-2-ketobutyrate (HMKB). In the reductase reaction, this 2-ketoacid undergoes a metal-dependent reduction by NADPH to yield (R)-2,3-dihydroxy-isovalerate. This is Ketol-acid reductoisomerase (NADP(+)) from Edwardsiella ictaluri (strain 93-146).